A 182-amino-acid polypeptide reads, in one-letter code: Orotate phosphoribosyltransferase (182 aa).

5-phospho-alpha-D-ribose 1-diphosphate is bound by residues Arg96, Lys97, Lys100, His102, and 122–130 (EDTSTTGGS). 2 residues coordinate orotate: Thr126 and Arg154.

It belongs to the purine/pyrimidine phosphoribosyltransferase family. PyrE subfamily. As to quaternary structure, homodimer. It depends on Mg(2+) as a cofactor.

The enzyme catalyses orotidine 5'-phosphate + diphosphate = orotate + 5-phospho-alpha-D-ribose 1-diphosphate. It participates in pyrimidine metabolism; UMP biosynthesis via de novo pathway; UMP from orotate: step 1/2. In terms of biological role, catalyzes the transfer of a ribosyl phosphate group from 5-phosphoribose 1-diphosphate to orotate, leading to the formation of orotidine monophosphate (OMP). The chain is Orotate phosphoribosyltransferase from Streptomyces coelicolor (strain ATCC BAA-471 / A3(2) / M145).